Consider the following 95-residue polypeptide: Alpha-bungarotoxin isoform V31 (95 aa).

A signal peptide spans Met-1–Thr-21. 5 disulfides stabilise this stretch: Cys-24/Cys-44, Cys-37/Cys-65, Cys-50/Cys-54, Cys-69/Cys-80, and Cys-81/Cys-86.

It belongs to the three-finger toxin family. Long-chain subfamily. Type II alpha-neurotoxin sub-subfamily. In terms of assembly, monomer in solution, homodimer in crystal state. As to expression, expressed by the venom gland.

It localises to the secreted. Functionally, binds with high affinity to muscular (alpha-1/CHRNA1) and neuronal (alpha-7/CHRNA7) nicotinic acetylcholine receptor (nAChR) and inhibits acetylcholine from binding to the receptor, thereby impairing neuromuscular and neuronal transmission. The protein is Alpha-bungarotoxin isoform V31 of Bungarus multicinctus (Many-banded krait).